The chain runs to 306 residues: 4-hydroxybenzoate geranyltransferase 2 (306 aa).

The next 8 membrane-spanning stretches (helical) occupy residues I38–G58, P61–I81, L119–V139, I153–S173, G178–V198, I229–V249, I251–F271, and F285–F305.

The protein belongs to the UbiA prenyltransferase family. Mg(2+) serves as cofactor. As to expression, expressed only in roots.

It is found in the endoplasmic reticulum membrane. It catalyses the reaction 4-hydroxybenzoate + (2E)-geranyl diphosphate = 3-geranyl-4-hydroxybenzoate + diphosphate. Prenyltransferase involved in the biosynthesis of shikonin, a naphthoquinone secondary metabolite. Could accept only geranyl diphosphate and not dimethylallyl diphosphate, farnesyl diphosphate, or geranylgeranyl diphosphate as substrate. The chain is 4-hydroxybenzoate geranyltransferase 2 (PGT-2) from Lithospermum erythrorhizon (Purple gromwell).